A 360-amino-acid chain; its full sequence is 3-dehydroquinate synthase (360 aa).

Residues 69–74 (DGEKYK), 103–107 (GVVGD), 127–128 (TT), Lys-140, Lys-149, and 167–170 (TLDT) contribute to the NAD(+) site. Zn(2+) contacts are provided by Glu-182, His-246, and His-263.

The protein belongs to the sugar phosphate cyclases superfamily. Dehydroquinate synthase family. Co(2+) is required as a cofactor. Zn(2+) serves as cofactor. Requires NAD(+) as cofactor.

It localises to the cytoplasm. It carries out the reaction 7-phospho-2-dehydro-3-deoxy-D-arabino-heptonate = 3-dehydroquinate + phosphate. It participates in metabolic intermediate biosynthesis; chorismate biosynthesis; chorismate from D-erythrose 4-phosphate and phosphoenolpyruvate: step 2/7. Catalyzes the conversion of 3-deoxy-D-arabino-heptulosonate 7-phosphate (DAHP) to dehydroquinate (DHQ). The protein is 3-dehydroquinate synthase of Vesicomyosocius okutanii subsp. Calyptogena okutanii (strain HA).